The primary structure comprises 352 residues: N-acetyl-gamma-glutamyl-phosphate reductase (352 aa).

Residue Cys-149 is part of the active site.

The protein belongs to the NAGSA dehydrogenase family. Type 1 subfamily.

The protein resides in the cytoplasm. The enzyme catalyses N-acetyl-L-glutamate 5-semialdehyde + phosphate + NADP(+) = N-acetyl-L-glutamyl 5-phosphate + NADPH + H(+). It functions in the pathway amino-acid biosynthesis; L-arginine biosynthesis; N(2)-acetyl-L-ornithine from L-glutamate: step 3/4. In terms of biological role, catalyzes the NADPH-dependent reduction of N-acetyl-5-glutamyl phosphate to yield N-acetyl-L-glutamate 5-semialdehyde. This is N-acetyl-gamma-glutamyl-phosphate reductase from Polynucleobacter asymbioticus (strain DSM 18221 / CIP 109841 / QLW-P1DMWA-1) (Polynucleobacter necessarius subsp. asymbioticus).